The sequence spans 181 residues: TATA-box-binding protein (181 aa).

Repeat copies occupy residues 7-83 (IVNV…IKEL) and 98-173 (VQNM…LTTL).

The protein belongs to the TBP family.

General factor that plays a role in the activation of archaeal genes transcribed by RNA polymerase. Binds specifically to the TATA box promoter element which lies close to the position of transcription initiation. The protein is TATA-box-binding protein of Methanococcus maripaludis (strain C7 / ATCC BAA-1331).